Reading from the N-terminus, the 164-residue chain is Cytochrome c-type biogenesis protein CcmE (164 aa).

Over 1 to 8 (MNPRRKSR) the chain is Cytoplasmic. The chain crosses the membrane as a helical; Signal-anchor for type II membrane protein span at residues 9 to 29 (LYLAVVVLIGIGLTTTLVLYA). Topologically, residues 30–164 (LRSNIDLFYT…NSTAAQGNAS (135 aa)) are periplasmic. Heme is bound by residues His130 and Tyr134. Over residues 131-150 (DEKYTPPEVKEAMKENHTRP) the composition is skewed to basic and acidic residues. The segment at 131–164 (DEKYTPPEVKEAMKENHTRPAEAYNSTAAQGNAS) is disordered. Residues 154–164 (YNSTAAQGNAS) show a composition bias toward polar residues.

It belongs to the CcmE/CycJ family.

It is found in the cell inner membrane. In terms of biological role, heme chaperone required for the biogenesis of c-type cytochromes. Transiently binds heme delivered by CcmC and transfers the heme to apo-cytochromes in a process facilitated by CcmF and CcmH. This Yersinia enterocolitica serotype O:8 / biotype 1B (strain NCTC 13174 / 8081) protein is Cytochrome c-type biogenesis protein CcmE.